The sequence spans 167 residues: NADH-ubiquinone oxidoreductase chain 6 (167 aa).

4 helical membrane-spanning segments follow: residues 5 to 25, 34 to 54, 60 to 80, and 138 to 158; these read IIMLSKIFMSSLISMILTIYL, MLLIYLISYSIYMSLMMFTMC, LILMILIVFLSGMLIMFSYFI, and FFIMILMLIITLILMTKITYI.

The protein belongs to the complex I subunit 6 family.

The protein localises to the mitochondrion membrane. It catalyses the reaction a ubiquinone + NADH + 5 H(+)(in) = a ubiquinol + NAD(+) + 4 H(+)(out). Functionally, core subunit of the mitochondrial membrane respiratory chain NADH dehydrogenase (Complex I) that is believed to belong to the minimal assembly required for catalysis. Complex I functions in the transfer of electrons from NADH to the respiratory chain. The immediate electron acceptor for the enzyme is believed to be ubiquinone. The polypeptide is NADH-ubiquinone oxidoreductase chain 6 (ND6) (Apis mellifera ligustica (Common honeybee)).